The chain runs to 48 residues: Large ribosomal subunit protein bL34 (48 aa).

Belongs to the bacterial ribosomal protein bL34 family.

In Mycoplasma pneumoniae (strain ATCC 29342 / M129 / Subtype 1) (Mycoplasmoides pneumoniae), this protein is Large ribosomal subunit protein bL34 (rpmH).